The sequence spans 422 residues: 4-hydroxy-3-methylbut-2-en-1-yl diphosphate synthase (flavodoxin) (422 aa).

Cys-316, Cys-319, Cys-362, and Glu-369 together coordinate [4Fe-4S] cluster.

This sequence belongs to the IspG family. The cofactor is [4Fe-4S] cluster.

It catalyses the reaction (2E)-4-hydroxy-3-methylbut-2-enyl diphosphate + oxidized [flavodoxin] + H2O + 2 H(+) = 2-C-methyl-D-erythritol 2,4-cyclic diphosphate + reduced [flavodoxin]. Its pathway is isoprenoid biosynthesis; isopentenyl diphosphate biosynthesis via DXP pathway; isopentenyl diphosphate from 1-deoxy-D-xylulose 5-phosphate: step 5/6. Its function is as follows. Converts 2C-methyl-D-erythritol 2,4-cyclodiphosphate (ME-2,4cPP) into 1-hydroxy-2-methyl-2-(E)-butenyl 4-diphosphate. This chain is 4-hydroxy-3-methylbut-2-en-1-yl diphosphate synthase (flavodoxin), found in Ehrlichia ruminantium (strain Welgevonden).